A 306-amino-acid polypeptide reads, in one-letter code: MGTRGLQGLGGRPQGRGCLLLAVAGATSLVTLLLAVPITVLAVLALVPQDQGRRVEKIIGSGAQAQKRLDDSKPSCILPSPSSLSETPDPRLHPQRSNASRNLASTSQGPVAQSSREASAWMTILSPAADSTPDPGVQQLPKGEPETDLNPELPAAHLIGAWMSGQGLSWEASQEEAFLRSGAQFSPTHGLALPQDGVYYLYCHVGYRGRTPPAGRSRARSLTLRSALYRAGGAYGRGSPELLLEGAETVTPVVDPIGYGSLWYTSVGFGGLAQLRSGERVYVNISHPDMVDYRRGKTFFGAVMVG.

Over 1-27 (MGTRGLQGLGGRPQGRGCLLLAVAGAT) the chain is Cytoplasmic. Residues 28-48 (SLVTLLLAVPITVLAVLALVP) form a helical; Signal-anchor for type II membrane protein membrane-spanning segment. Residues 49-306 (QDQGRRVEKI…KTFFGAVMVG (258 aa)) lie on the Extracellular side of the membrane. Disordered regions lie at residues 63–112 (AQAQ…GPVA) and 127–151 (PAAD…DLNP). Residues 74–85 (PSCILPSPSSLS) are compositionally biased toward low complexity. The span at 95–112 (QRSNASRNLASTSQGPVA) shows a compositional bias: polar residues. Asn-98 carries an N-linked (GlcNAc...) asparagine glycan. One can recognise a THD domain in the interval 154-305 (PAAHLIGAWM…GKTFFGAVMV (152 aa)). A glycan (N-linked (GlcNAc...) asparagine) is linked at Asn-284.

This sequence belongs to the tumor necrosis factor family. In terms of assembly, heterotrimer of either two LTB and one LTA subunits or (less prevalent) two LTA and one LTB subunits.

It localises to the membrane. In terms of biological role, cytokine that binds to LTBR/TNFRSF3. May play a specific role in immune response regulation. Provides the membrane anchor for the attachment of the heterotrimeric complex to the cell surface. The polypeptide is Lymphotoxin-beta (Ltb) (Mus musculus (Mouse)).